The sequence spans 701 residues: Peptide transporter CstA (701 aa).

Topologically, residues 1–6 (MNKSGK) are cytoplasmic. A helical transmembrane segment spans residues 7 to 27 (YLVWTVLSVMGAFALGYIALN). Topologically, residues 28–33 (RGEQIN) are periplasmic. Residues 34–54 (ALWIVVASVCIYLIAYRFYGL) traverse the membrane as a helical segment. The Cytoplasmic portion of the chain corresponds to 55–86 (YIAKNVLAVDPTRMTPAVRHNDGLDYVPTDKK). The helical transmembrane segment at 87-107 (VLFGHHFAAIAGAGPLVGPVL) threads the bilayer. The Periplasmic portion of the chain corresponds to 108 to 117 (AAQMGYLPGM). Residues 118-138 (IWLLAGVVLAGAVQDFMVLFV) form a helical membrane-spanning segment. Residues 139–160 (STRRDGRSLGELVKEEMGPTAG) are Cytoplasmic-facing. Residues 161 to 181 (VIALVACFMIMVIILAVLAMI) form a helical membrane-spanning segment. Residues 182 to 189 (VVKALTHS) are Periplasmic-facing. Residues 190–210 (PWGTYTVAFTIPLALFMGIYL) form a helical membrane-spanning segment. The Cytoplasmic segment spans residues 211–217 (RYLRPGR). The chain crosses the membrane as a helical span at residues 218–238 (IGEVSVIGLVFLIFAIISGGW). Topologically, residues 239–255 (VAESPTWAPYFDFTGVQ) are periplasmic. A helical membrane pass occupies residues 256–276 (LTWMLVGYGFVAAVLPVWLLL). Over 277-280 (APRD) the chain is Cytoplasmic. The chain crosses the membrane as a helical span at residues 281 to 301 (YLSTFLKIGTIVGLAVGILIM). At 302–324 (RPTLTMPALTKFVDGTGPVWTGN) the chain is on the periplasmic side. Residues 325–345 (LFPFLFITIACGAVSGFHALI) form a helical membrane-spanning segment. Topologically, residues 346–372 (SSGTTPKMLANEGQACFIGYGGMLMES) are cytoplasmic. The chain crosses the membrane as a helical span at residues 373–393 (FVAIMALVSACIIDPGVYFAM). The Periplasmic segment spans residues 394-395 (NS). The helical transmembrane segment at 396–416 (PMAVLAPAGTADVVASAAQVV) threads the bilayer. The Cytoplasmic portion of the chain corresponds to 417 to 439 (SSWGFSITPDTLNQIASEVGEQS). A helical membrane pass occupies residues 440-460 (IISRAGGAPTLAVGMAYILHG). At 461 to 463 (ALG) the chain is on the periplasmic side. A helical transmembrane segment spans residues 464–484 (GMMDVAFWYHFAILFEALFIL). The Cytoplasmic portion of the chain corresponds to 485-523 (TAVDAGTRAARFMLQDLLGVVSPGLKRTDSLPANLLATA). The helical transmembrane segment at 524-544 (LCVLAWGYFLHQGVVDPLGGI) threads the bilayer. Residues 545-550 (NTLWPL) lie on the Periplasmic side of the membrane. Residues 551-571 (FGIANQMLAGMALMLCAVVLF) traverse the membrane as a helical segment. The Cytoplasmic segment spans residues 572 to 577 (KMKRQR). Residues 578–598 (YAWVALVPTAWLLICTLTAGW) traverse the membrane as a helical segment. At 599 to 643 (QKAFSPDAKVGFLAIANKFQAMIDSGNIPSQYTESQLAQLVFNNR) the chain is on the periplasmic side. A helical transmembrane segment spans residues 644–664 (LDAGLTIFFMVVVVVLALFSI). Residues 665 to 701 (KTALAALKDPKPTAKETPYEPMPENVEEIVAQAKGAH) lie on the Cytoplasmic side of the membrane.

This sequence belongs to the peptide transporter carbon starvation (CstA) (TC 2.A.114) family.

It is found in the cell inner membrane. Involved in peptide utilization during carbon starvation. The protein is Peptide transporter CstA of Escherichia coli (strain K12).